The chain runs to 2329 residues: Genome polyprotein (2329 aa).

A Peptidase C28 domain is found at 29–182; that stretch reads MEFTLHNGEK…DPSDVLVFVP (154 aa). Catalysis depends on for leader protease activity residues cysteine 51, histidine 148, and aspartate 163. Disordered regions lie at residues 197-218 and 238-264; these read QKRL…QSGN and QLGD…NNTQ. The N-myristoyl glycine; by host moiety is linked to residue glycine 202. 2 stretches are compositionally biased toward polar residues: residues 204–218 and 238–251; these read GQSS…QSGN and QLGD…SNEG. Residues 252–264 are compositionally biased toward low complexity; that stretch reads STDTTSTHTNNTQ. Positions 787–795 are antigenic epitope; the sequence is ALLRSATYY. Residues 866-868 carry the Cell attachment site motif; the sequence is RGD. The SF3 helicase domain maps to 1186–1350; it reads NVHIANLCKV…DGYKINNKLD (165 aa). ATP is bound at residue 1214–1221; that stretch reads GKSGQGKS. The stretch at 1478 to 1498 is an intramembrane region; the sequence is KENFEIVALCLTLLANIVIMI. Composition is skewed to basic and acidic residues over residues 1526 to 1535 and 1546 to 1558; these read KTLDEAEKNP and FRER…KTSD. The interval 1526–1577 is disordered; sequence KTLDEAEKNPLETSGASTVGFRERTLPGRKTSDDVNSEPVKSVEEQPQAEGP. Tyrosine 1578, tyrosine 1601, and tyrosine 1625 each carry O-(5'-phospho-RNA)-tyrosine. Residues 1649 to 1845 form the Peptidase C3 domain; sequence APPTDLQKMV…YCSCVSRSML (197 aa). Histidine 1692 serves as the catalytic For protease 3C activity; Proton donor/acceptor. Residues aspartate 1730 and cysteine 1809 each act as for protease 3C activity in the active site. 2 short sequence motifs (nuclear localization signal) span residues 1875-1883 and 1876-1883; these read MRKTKLAPT and RKTKLAPT. The RdRp catalytic domain maps to 2093–2211; that stretch reads RNVWDVDYSA…ASDYDLDFEA (119 aa). The active-site For RdRp activity is the aspartate 2197.

Belongs to the picornaviruses polyprotein family. Interacts with host ISG15. In terms of assembly, interacts (via R-G-D motif) with host ITGAV/ITGB6. Interacts with host MAVS; this interaction inhibits binding of host TRAF3 to MAVS, thereby suppressing interferon-mediated responses. As to quaternary structure, forms homooligomers. Homohexamer. Interacts with host VIM. Interacts with host BECN1. In terms of assembly, interacts with host DCTN3. As to quaternary structure, interacts with RNA-dependent RNA polymerase; this interaction allows 3B-1 to binds 2 polymerases and act as a primer. It also allows the recruitment of the RNA-dependent RNA polymerase to host membranes. Interacts with RNA-dependent RNA polymerase; this interaction allows 3B-2 to act as a primer. In terms of assembly, interacts with RNA-dependent RNA polymerase; this interaction allows 3B-3 to act as a primer. As to quaternary structure, interacts with 3B-1; this interaction allows 3B-1 to binds 2 polymerases and act as a primer. It also allows the recruitment of the RNA-dependent RNA polymerase to host membranes. Interacts with 3B-2; this interaction allows 3B-2 to act as a primer. Interacts with 3B-3; this interaction allows 3B-3 to act as a primer. Post-translationally, specific enzymatic cleavages in vivo by the viral proteases yield a variety of precursors and mature proteins. The polyprotein seems to be cotranslationally cleaved at the 2A/2B junction by a ribosomal skip from one codon to the next without formation of a peptide bond. This process would release the L-P1-2A peptide from the translational complex. During virion maturation, immature virions are rendered infectious following cleavage of VP0 into VP4 and VP2. This maturation seems to be an autocatalytic event triggered by the presence of RNA in the capsid and is followed by a conformational change of the particle. In terms of processing, myristoylation is required during RNA encapsidation and formation of the mature virus particle. Post-translationally, uridylylated by the polymerase and covalently linked to the 5'-end of genomic RNA. These uridylylated forms act as a nucleotide-peptide primer for the polymerase.

The protein resides in the host nucleus. It is found in the host cytoplasm. It localises to the virion. The protein localises to the host endoplasmic reticulum membrane. Its subcellular location is the host cytoplasmic vesicle membrane. The catalysed reaction is Autocatalytically cleaves itself from the polyprotein of the foot-and-mouth disease virus by hydrolysis of a Lys-|-Gly bond, but then cleaves host cell initiation factor eIF-4G at bonds -Gly-|-Arg- and -Lys-|-Arg-.. It carries out the reaction a ribonucleoside 5'-triphosphate + H2O = a ribonucleoside 5'-diphosphate + phosphate + H(+). The enzyme catalyses RNA(n) + a ribonucleoside 5'-triphosphate = RNA(n+1) + diphosphate. It catalyses the reaction Selective cleavage of Gln-|-Gly bond in the poliovirus polyprotein. In other picornavirus reactions Glu may be substituted for Gln, and Ser or Thr for Gly.. In terms of biological role, autocatalytically cleaves itself from the polyprotein at the L/VP0 junction. Also cleaves the host translation initiation factors EIF4G1 and EIF4G3, in order to shut off the capped cellular mRNA transcription. Plays a role in counteracting host innate antiviral response using diverse mechanisms. Possesses a deubiquitinase activity acting on both 'Lys-48' and 'Lys-63'-linked polyubiquitin chains. In turn, inhibits the ubiquitination and subsequent activation of key signaling molecules of type I IFN response such as host RIGI, TBK1, TRAF3 and TRAF6. Inhibits host NF-kappa-B activity by inducing a decrease in RELA mRNA levels. Cleaves a peptide bond in the C-terminus of host ISG15, resulting in the damaging of this modifier that can no longer be attached to target proteins. Also cleaves host G3BP1 and G3BP2 in order to inhibit cytoplasmic stress granules assembly. Lies on the inner surface of the capsid shell. After binding to the host receptor, the capsid undergoes conformational changes. Capsid protein VP4 is released, capsid protein VP1 N-terminus is externalized, and together, they shape a pore in the host membrane through which the viral genome is translocated into the host cell cytoplasm. After genome has been released, the channel shrinks. Functionally, forms an icosahedral capsid of pseudo T=3 symmetry with capsid proteins VP1 and VP3. The capsid is composed of 60 copies of each capsid protein organized in the form of twelve pentamers and encloses the viral positive strand RNA genome. Upon acidifcation in the endosome, dissociates into pentamers. Its function is as follows. Forms an icosahedral capsid of pseudo T=3 symmetry with capsid proteins VP0 and VP3. The capsid is composed of 60 copies of each capsid protein organized in the form of twelve pentamers and encloses the viral positive strand RNA genome. Upon acidifcation in the endosome, dissociates into pentamers. In terms of biological role, forms an icosahedral capsid of pseudo T=3 symmetry with capsid proteins VP2 and VP3. The capsid is composed of 60 copies of each capsid protein organized in the form of twelve pentamers and encloses the viral positive strand RNA genome. Mediates cell entry by attachment to an integrin receptor, usually host ITGAV/ITGB6. In addition, targets host MAVS to suppress type I IFN pathway. Upon acidifcation in the endosome, dissociates into pentamers. Mediates self-processing of the polyprotein by a translational effect termed 'ribosome skipping'. Mechanistically, 2A-mediated cleavage occurs between the C-terminal glycine and the proline of the downstream protein 2B. In the case of foot-and-mouth disease virus, the 2A oligopeptide is post-translationally 'trimmed' from the C-terminus of the upstream protein 1D by 3C proteinase. Functionally, plays an essential role in the virus replication cycle by acting as a viroporin. Creates a pore in the host endoplasmic reticulum and as a consequence releases Ca2+ in the cytoplasm of infected cell. In turn, high levels of cytoplasmic calcium may trigger membrane trafficking and transport of viral ER-associated proteins to viroplasms, sites of viral genome replication. Its function is as follows. Associates with and induces structural rearrangements of intracellular membranes. Triggers host autophagy by interacting with host BECN1 and thereby promotes viral replication. Participates in viral replication and interacts with host DHX9. Displays RNA-binding, nucleotide binding and NTPase activities. May play a role in virion morphogenesis and viral RNA encapsidation by interacting with the capsid protein VP3. In terms of biological role, plays important roles in virus replication, virulence and host range. Cooperates with host DDX56 to inhibit IRF3 nuclear translocation and subsequent type I interferon production. Covalently linked to the 5'-end of both the positive-strand and negative-strand genomic RNAs. Acts as a genome-linked replication primer. Functionally, cysteine protease that generates mature viral proteins from the precursor polyprotein. In addition to its proteolytic activity, binds to viral RNA and thus influences viral genome replication. RNA and substrate bind cooperatively to the protease. Its function is as follows. RNA-directed RNA polymerase 3D-POL replicates genomic and antigenomic RNA by recognizing replications specific signals. Covalently attaches UMP to a tyrosine of VPg, which is used to prime RNA synthesis. The positive stranded RNA genome is first replicated at virus induced membranous vesicles, creating a dsRNA genomic replication form. This dsRNA is then used as template to synthesize positive stranded RNA genomes. ss(+)RNA genomes are either translated, replicated or encapsidated. This chain is Genome polyprotein, found in Foot-and-mouth disease virus serotype Asia-1 (FMDV).